Reading from the N-terminus, the 2968-residue chain is Polyketide synthase 37 (2968 aa).

The Ketosynthase family 3 (KS3) domain maps to 32 to 454 (KEPIAIIGIG…GSNSSLFLSS (423 aa)). Catalysis depends on for beta-ketoacyl synthase activity residues C198, H338, and H378. Residues 624–950 (FIFSGQGQQW…LSTLSKNSNS (327 aa)) form a malonyl-CoA:ACP transacylase (MAT) domain region. Residue S718 is the For malonyltransferase activity of the active site. The N-terminal hotdog fold stretch occupies residues 1017–1157 (PPMFISLDRK…GIIKYGTNYL (141 aa)). The PKS/mFAS DH domain maps to 1017-1350 (PPMFISLDRK…FKGINSSSSS (334 aa)). The dehydratase (DH) domain stretch occupies residues 1031–1345 (TPSFEVRLNQ…LTNLEFKGIN (315 aa)). H1049 functions as the Proton acceptor; for dehydratase activity in the catalytic mechanism. The segment at 1183-1350 (FKSFNSNEFY…FKGINSSSSS (168 aa)) is C-terminal hotdog fold. The active-site Proton donor; for dehydratase activity is D1257. The interval 1522–1547 (SCGGGGGSTNNTISNSSSSISSIDNG) is disordered. Positions 1530–1547 (TNNTISNSSSSISSIDNG) are enriched in low complexity. Positions 1718 to 2053 (GIISDLKIKQ…SGNHIGKILI (336 aa)) are enoyl reductase (ER) domain. The interval 2083-2277 (TYIFTGFGGL…LKSSCIHLAS (195 aa)) is ketoreductase (KR) domain. The disordered stretch occupies residues 2379–2400 (GDGSFDDLNQLEDEGQQGFGNG). Positions 2421 to 2498 (FDNDFYTKSI…STVELIKNKL (78 aa)) constitute a Carrier domain. Position 2458 is an O-(pantetheine 4'-phosphoryl)serine (S2458). Positions 2568-2589 (SSSSNNSNSKNELTSPPPSAKR) are disordered. The chalcone synthase stretch occupies residues 2707 to 2968 (ISHVVGVTST…IEAILFKLIK (262 aa)). Residue C2747 is part of the active site.

Pantetheine 4'-phosphate serves as cofactor.

The enzyme catalyses (E)-4-coumaroyl-CoA + 3 malonyl-CoA + 3 H(+) = 2',4,4',6'-tetrahydroxychalcone + 3 CO2 + 4 CoA. It carries out the reaction hexanoyl-CoA + 3 malonyl-CoA + 3 H(+) = 2,4,6-trihydroxyphenylhexan-1-one + 3 CO2 + 4 CoA. The protein operates within secondary metabolite biosynthesis; flavonoid biosynthesis. Its function is as follows. Polyketide synthase; part of the gene cluster that mediates the biosynthesis of DIF-1 (Differentiation Inducing Factor-1), a signal molecule involved in the differentiation of pstO (prestalk-O) cells. The three-step process begins with the formation of (2,4,6-trihydroxyphenyl)-1-hexan-1-one (THPH) by the polyketide synthase StlB. THPH is then dichlorinated by the flavin-dependent halogenase ChlA. The last step of DIF-1 biosynthesis is the O-methylation of dichloro-THPH (or des-methyl-DIF-1) by the methyltransferase DmtA to yield DIF-1. The sequence is that of Polyketide synthase 37 (StlB) from Dictyostelium discoideum (Social amoeba).